The chain runs to 424 residues: MHRLQVVLGHLAGRPESSSALQAAPCSARFPQASASDVVVVHGRRTPIGRASRGGFKNTTPDELLSAVLTAVLQDVRLKPEQLGDISVGNVLEPGAGAVMARIAQFLSGIPETVPLSTVNRQCSSGLQAVANIAGGIRNGSYDIGMACGVESMSLSGMGNPGNISSRLLESEKARDCLTPMGMTSENVAERFGISRQKQDDFALASQQKAASAQSRGCFRAEIVPVTTTVLDDKGDKKTITVSQDEGVRPSTTMQGLAKLKPAFKDGGSTTAGNSSQVSDGAAAVLLARRSKAEELGLPILGVLRSYAVVGVPPDVMGIGPAYAIPAALQKAGLTVNDIDIFEINEAFASQAVYCVEKLGIPAEKVNPLGGAIALGHPLGCTGARQVVTLLNELKRRGRRAYGVVSMCIGTGMGAAAVFEYPGN.

The transit peptide at 1–26 (MHRLQVVLGHLAGRPESSSALQAAPC) directs the protein to the peroxisome. The interval 1–26 (MHRLQVVLGHLAGRPESSSALQAAPC) is PTS2-type peroxisomal targeting signal. Cys123 serves as the catalytic Acyl-thioester intermediate. N6-acetyllysine occurs at positions 173 and 234. Catalysis depends on proton acceptor residues His377 and Cys408.

Belongs to the thiolase-like superfamily. Thiolase family. As to quaternary structure, homodimer. Interacts (via PTS2-type peroxisomal targeting signal region) with PEX7; leading to its translocation into peroxisomes. Mainly expressed in liver and intestine.

Its subcellular location is the peroxisome. It catalyses the reaction an acyl-CoA + acetyl-CoA = a 3-oxoacyl-CoA + CoA. The catalysed reaction is 2 acetyl-CoA = acetoacetyl-CoA + CoA. It carries out the reaction tetradecanoyl-CoA + acetyl-CoA = 3-oxohexadecanoyl-CoA + CoA. The enzyme catalyses hexanoyl-CoA + acetyl-CoA = 3-oxooctanoyl-CoA + CoA. It catalyses the reaction 3-oxohexadecanedioyl-CoA + CoA = tetradecanedioyl-CoA + acetyl-CoA. The catalysed reaction is 3-oxo-(6Z,9Z,12Z,15Z,18Z,21Z)-tetracosahexaenoyl-CoA + CoA = (4Z,7Z,10Z,13Z,16Z,19Z)-docosahexaenoyl-CoA + acetyl-CoA. The protein operates within lipid metabolism; peroxisomal fatty acid beta-oxidation. Its function is as follows. Responsible for the thiolytic cleavage of straight chain 3-keto fatty acyl-CoAs (3-oxoacyl-CoAs). Plays an important role in fatty acid peroxisomal beta-oxidation. Catalyzes the cleavage of short, medium, long, and very long straight chain 3-oxoacyl-CoAs. This Mus musculus (Mouse) protein is 3-ketoacyl-CoA thiolase A, peroxisomal.